Reading from the N-terminus, the 71-residue chain is uncharacterized protein (71 aa).

Residues 1–71 form a disordered region; that stretch reads MLFETLKSLS…AFFSRPFYSE (71 aa). The span at 7-33 shows a compositional bias: polar residues; sequence KSLSQQNGGQFSDEQSFESPISSSFNG. Low complexity predominate over residues 35–65; sequence SMPFGSPSSTMSSSYKGNTNSSTKSSSAFFS.

This is an uncharacterized protein from Dictyostelium discoideum (Social amoeba).